Here is a 453-residue protein sequence, read N- to C-terminus: Signal recognition particle protein (453 aa).

Residues 107–114 (GLQGAGKT), 190–194 (DTAGR), and 248–251 (TKVD) contribute to the GTP site.

It belongs to the GTP-binding SRP family. SRP54 subfamily. As to quaternary structure, part of the signal recognition particle protein translocation system, which is composed of SRP and FtsY. SRP is a ribonucleoprotein composed of Ffh and a 4.5S RNA molecule.

It is found in the cytoplasm. The catalysed reaction is GTP + H2O = GDP + phosphate + H(+). Its function is as follows. Involved in targeting and insertion of nascent membrane proteins into the cytoplasmic membrane. Binds to the hydrophobic signal sequence of the ribosome-nascent chain (RNC) as it emerges from the ribosomes. The SRP-RNC complex is then targeted to the cytoplasmic membrane where it interacts with the SRP receptor FtsY. Interaction with FtsY leads to the transfer of the RNC complex to the Sec translocase for insertion into the membrane, the hydrolysis of GTP by both Ffh and FtsY, and the dissociation of the SRP-FtsY complex into the individual components. This chain is Signal recognition particle protein, found in Escherichia coli O157:H7.